Reading from the N-terminus, the 78-residue chain is Acyl carrier protein (78 aa).

Residues 2 to 77 (SSIEERVKKI…LAIDYINANL (76 aa)) enclose the Carrier domain. The residue at position 37 (S37) is an O-(pantetheine 4'-phosphoryl)serine.

The protein belongs to the acyl carrier protein (ACP) family. Post-translationally, 4'-phosphopantetheine is transferred from CoA to a specific serine of apo-ACP by AcpS. This modification is essential for activity because fatty acids are bound in thioester linkage to the sulfhydryl of the prosthetic group.

It is found in the cytoplasm. The protein operates within lipid metabolism; fatty acid biosynthesis. Carrier of the growing fatty acid chain in fatty acid biosynthesis. The polypeptide is Acyl carrier protein (Cellvibrio japonicus (strain Ueda107) (Pseudomonas fluorescens subsp. cellulosa)).